The chain runs to 140 residues: MAAAAAGPGAPLSADELLPKGDAEKPEEELEEEDDEELDETLSERLWGLTEMFPERVRSAAGATFDLSLFVAQKMYRFSRAALWIGTTSFMILVLPVVFETEKLQMEQQQQLQQRQILLGPNTGLSGGMPGALPSLPGKI.

Residues 1-11 (MAAAAAGPGAP) are compositionally biased toward low complexity. Positions 1 to 40 (MAAAAAGPGAPLSADELLPKGDAEKPEEELEEEDDEELDE) are disordered. Residues 1–81 (MAAAAAGPGA…AQKMYRFSRA (81 aa)) lie on the Cytoplasmic side of the membrane. Serine 13 bears the Phosphoserine mark. Acidic residues predominate over residues 25–40 (KPEEELEEEDDEELDE). The import sequence; necessary for mitochondrion outer membrane localization and integration in the TOM complex stretch occupies residues 39–48 (DETLSERLWG). Threonine 41 is modified (phosphothreonine). Position 43 is a phosphoserine (serine 43). The segment at 81 to 101 (AALWIGTTSFMILVLPVVFET) is TMD; necessary for mitochondrion outer membrane localization and integration in the TOM complex. Residues 82-101 (ALWIGTTSFMILVLPVVFET) form a helical membrane-spanning segment. Residues 102 to 140 (EKLQMEQQQQLQQRQILLGPNTGLSGGMPGALPSLPGKI) lie on the Mitochondrial intermembrane side of the membrane. Residues 121-140 (PNTGLSGGMPGALPSLPGKI) form a C-tail signal; necessary for mitochondrion outer membrane localization and integration in the TOM complex region.

This sequence belongs to the Tom22 family. As to quaternary structure, forms part of the preprotein translocase complex of the outer mitochondrial membrane (TOM complex) which consists of at least 7 different proteins (TOMM5, TOMM6, TOMM7, TOMM20, TOMM22, TOMM40 and TOMM70). Interacts with PPP2R2B and TOMM40.

It localises to the mitochondrion outer membrane. Functionally, central receptor component of the translocase of the outer membrane of mitochondria (TOM complex) responsible for the recognition and translocation of cytosolically synthesized mitochondrial preproteins. Together with the peripheral receptor TOM20 functions as the transit peptide receptor and facilitates the movement of preproteins into the translocation pore. Required for the translocation across the mitochondrial outer membrane of cytochrome P450 monooxygenases. The sequence is that of Mitochondrial import receptor subunit TOM22 homolog (TOMM22) from Bos taurus (Bovine).